The sequence spans 393 residues: Phosphoglycerate kinase (393 aa).

Residues 21–23 (DLN), arginine 36, 59–62 (HLGR), arginine 114, and arginine 147 each bind substrate. ATP-binding positions include lysine 198, glutamate 320, and 346–349 (GGDT).

It belongs to the phosphoglycerate kinase family. Monomer.

It localises to the cytoplasm. The catalysed reaction is (2R)-3-phosphoglycerate + ATP = (2R)-3-phospho-glyceroyl phosphate + ADP. The protein operates within carbohydrate degradation; glycolysis; pyruvate from D-glyceraldehyde 3-phosphate: step 2/5. This is Phosphoglycerate kinase from Methylobacillus flagellatus (strain ATCC 51484 / DSM 6875 / VKM B-1610 / KT).